Here is a 757-residue protein sequence, read N- to C-terminus: Cellulose synthase-like protein B5 (757 aa).

2 consecutive transmembrane segments (helical) span residues 24–44 (AVDL…ILHI) and 50–70 (VWLL…IFTC). Residues aspartate 136 and aspartate 460 contribute to the active site. 6 helical membrane-spanning segments follow: residues 531–551 (LAYF…YCLL), 572–592 (IVTL…SLGF), 613–633 (LFSI…GFVI), 671–691 (LFIP…GYLV), 704–724 (GSGL…LPFL), and 735–755 (IPLS…FFCV).

The protein belongs to the glycosyltransferase 2 family. Plant cellulose synthase-like B subfamily. Expressed in young seedlings, primarily in the vascular tissue. Expressed in the root cap.

It is found in the golgi apparatus membrane. Functionally, thought to be a Golgi-localized beta-glycan synthase that polymerize the backbones of noncellulosic polysaccharides (hemicelluloses) of plant cell wall. This is Cellulose synthase-like protein B5 (CSLB5) from Arabidopsis thaliana (Mouse-ear cress).